The chain runs to 337 residues: L-Ala-D/L-amino acid epimerase (337 aa).

Substrate is bound by residues threonine 129 and 151-153 (KIK). Residues aspartate 177, glutamate 203, and aspartate 228 each coordinate Mg(2+). Substrate is bound by residues lysine 250 and 300–302 (DMD).

It belongs to the mandelate racemase/muconate lactonizing enzyme family. The cofactor is Mg(2+).

Functionally, broad specificity dipeptide epimerase. Catalyzes the epimerization of L-Ala-L-Ala, L-Ala-L-Glu, L-Ala-L-Ser, L-Ala-L-Thr and L-Ala-L-Met (in vitro). The sequence is that of L-Ala-D/L-amino acid epimerase from Maribacter sp. (strain HTCC2170 / KCCM 42371).